We begin with the raw amino-acid sequence, 155 residues long: Large ribosomal subunit protein bL9c (155 aa).

Belongs to the bacterial ribosomal protein bL9 family.

Its subcellular location is the plastid. It is found in the chloroplast. Its function is as follows. Binds to the 23S rRNA. This Pyropia yezoensis (Susabi-nori) protein is Large ribosomal subunit protein bL9c.